A 91-amino-acid chain; its full sequence is PqqA binding protein (91 aa).

It belongs to the PqqD family. In terms of assembly, monomer. Interacts with PqqE.

The protein operates within cofactor biosynthesis; pyrroloquinoline quinone biosynthesis. Functionally, functions as a PqqA binding protein and presents PqqA to PqqE, in the pyrroloquinoline quinone (PQQ) biosynthetic pathway. This Pseudomonas fluorescens (strain ATCC BAA-477 / NRRL B-23932 / Pf-5) protein is PqqA binding protein.